Reading from the N-terminus, the 349-residue chain is tRNA pseudouridine synthase D (349 aa).

Position 27 (Phe-27) interacts with substrate. Asp-80 functions as the Nucleophile in the catalytic mechanism. Asn-129 contacts substrate. The TRUD domain occupies 155-303; the sequence is GVPNYFGAQR…VEAARRAMLL (149 aa). Residue Phe-329 participates in substrate binding.

Belongs to the pseudouridine synthase TruD family.

It carries out the reaction uridine(13) in tRNA = pseudouridine(13) in tRNA. Functionally, responsible for synthesis of pseudouridine from uracil-13 in transfer RNAs. This is tRNA pseudouridine synthase D from Escherichia coli O17:K52:H18 (strain UMN026 / ExPEC).